Consider the following 434-residue polypeptide: Tubulin gamma chain (434 aa).

A135–G141 is a GTP binding site.

The protein belongs to the tubulin family.

Its subcellular location is the cytoplasm. The protein resides in the cytoskeleton. It localises to the microtubule organizing center. The protein localises to the spindle pole body. Tubulin is the major constituent of microtubules. The gamma chain is found at microtubule organizing centers (MTOC) such as the spindle poles or the centrosome, suggesting that it is involved in the minus-end nucleation of microtubule assembly. In Encephalitozoon cuniculi (strain GB-M1) (Microsporidian parasite), this protein is Tubulin gamma chain (TUB4).